The primary structure comprises 342 residues: N-acetyl-gamma-glutamyl-phosphate reductase (342 aa).

Residue Cys149 is part of the active site.

The protein belongs to the NAGSA dehydrogenase family. Type 1 subfamily.

The protein resides in the cytoplasm. It catalyses the reaction N-acetyl-L-glutamate 5-semialdehyde + phosphate + NADP(+) = N-acetyl-L-glutamyl 5-phosphate + NADPH + H(+). It participates in amino-acid biosynthesis; L-arginine biosynthesis; N(2)-acetyl-L-ornithine from L-glutamate: step 3/4. Functionally, catalyzes the NADPH-dependent reduction of N-acetyl-5-glutamyl phosphate to yield N-acetyl-L-glutamate 5-semialdehyde. This Ruegeria pomeroyi (strain ATCC 700808 / DSM 15171 / DSS-3) (Silicibacter pomeroyi) protein is N-acetyl-gamma-glutamyl-phosphate reductase.